The following is a 493-amino-acid chain: Probable malate:quinone oxidoreductase (493 aa).

It belongs to the MQO family. Requires FAD as cofactor.

The catalysed reaction is (S)-malate + a quinone = a quinol + oxaloacetate. It participates in carbohydrate metabolism; tricarboxylic acid cycle; oxaloacetate from (S)-malate (quinone route): step 1/1. This chain is Probable malate:quinone oxidoreductase, found in Mycobacterium tuberculosis (strain ATCC 25177 / H37Ra).